A 266-amino-acid chain; its full sequence is MLPYPFSYFSSIWGFRKPLSKRFELNWFQLLFTSIFLISLSMVPIAIQNSSQETYPLETFIDNVYEPLTDKVVQDLSEHATIVDGTLTYTGTASQAPSVVIGPSQIKELPKDLQLHFDTNELVISKESKELTRISYRAIQTEGFKSKDSLTQAISKDWYQQNRVYISLFLVLGASFLFGLNFFIVSLGASLLLYITKKSRLFSFRTFKECYHFILNCLGLPTLITLILGLFGQNMTTLITVQNILFVLYLVTIFYKTHFRDPNYHK.

Its function is as follows. Has a role in maltotetraose utilization. The chain is Maltodextrose utilization protein MalA (malA) from Streptococcus pneumoniae (strain ATCC BAA-255 / R6).